The primary structure comprises 140 residues: Anti-sigma F factor (140 aa).

Belongs to the anti-sigma-factor family.

It catalyses the reaction L-seryl-[protein] + ATP = O-phospho-L-seryl-[protein] + ADP + H(+). The catalysed reaction is L-threonyl-[protein] + ATP = O-phospho-L-threonyl-[protein] + ADP + H(+). Its function is as follows. Binds to sigma F and blocks its ability to form an RNA polymerase holoenzyme (E-sigma F). Phosphorylates SpoIIAA on a serine residue. This phosphorylation may enable SpoIIAA to act as an anti-anti-sigma factor that counteracts SpoIIAB and thus releases sigma F from inhibition. In Clostridium perfringens (strain ATCC 13124 / DSM 756 / JCM 1290 / NCIMB 6125 / NCTC 8237 / Type A), this protein is Anti-sigma F factor.